A 304-amino-acid chain; its full sequence is Aspartate carbamoyltransferase catalytic subunit (304 aa).

Carbamoyl phosphate is bound by residues Arg-49 and Thr-50. Lys-77 is an L-aspartate binding site. 3 residues coordinate carbamoyl phosphate: Arg-99, His-127, and Gln-130. Arg-160 and Arg-211 together coordinate L-aspartate. Ala-252 and Pro-253 together coordinate carbamoyl phosphate.

The protein belongs to the aspartate/ornithine carbamoyltransferase superfamily. ATCase family. In terms of assembly, heterododecamer (2C3:3R2) of six catalytic PyrB chains organized as two trimers (C3), and six regulatory PyrI chains organized as three dimers (R2).

The enzyme catalyses carbamoyl phosphate + L-aspartate = N-carbamoyl-L-aspartate + phosphate + H(+). It functions in the pathway pyrimidine metabolism; UMP biosynthesis via de novo pathway; (S)-dihydroorotate from bicarbonate: step 2/3. Catalyzes the condensation of carbamoyl phosphate and aspartate to form carbamoyl aspartate and inorganic phosphate, the committed step in the de novo pyrimidine nucleotide biosynthesis pathway. The polypeptide is Aspartate carbamoyltransferase catalytic subunit (Bacillus cytotoxicus (strain DSM 22905 / CIP 110041 / 391-98 / NVH 391-98)).